Consider the following 179-residue polypeptide: Large ribosomal subunit protein uL22c (179 aa).

The protein belongs to the universal ribosomal protein uL22 family. In terms of assembly, part of the 50S ribosomal subunit.

Its subcellular location is the plastid. The protein resides in the chloroplast. Functionally, this protein binds specifically to 23S rRNA. Its function is as follows. The globular domain of the protein is located near the polypeptide exit tunnel on the outside of the subunit, while an extended beta-hairpin is found that lines the wall of the exit tunnel in the center of the 70S ribosome. This Ranunculus macranthus (Large buttercup) protein is Large ribosomal subunit protein uL22c (rpl22).